Consider the following 953-residue polypeptide: Communesin biosynthesis cluster-specific transcription factor cnsN (953 aa).

The segment at 371–418 is disordered; sequence ELESTSPRTSHSSLSQDDTASLHSRSSLSSSPGRFPPSQKLVATSDSP. Residues 374–408 show a composition bias toward low complexity; sequence STSPRTSHSSLSQDDTASLHSRSSLSSSPGRFPPS.

The protein localises to the nucleus. Its function is as follows. Transcriptional regulator; part of the gene cluster that mediates the biosynthesis of communesins, a prominent class of indole alkaloids with great potential as pharmaceuticals. In Penicillium expansum (Blue mold rot fungus), this protein is Communesin biosynthesis cluster-specific transcription factor cnsN.